The sequence spans 542 residues: CTP synthase (542 aa).

The segment at 1-265 (MTRYIFVTGG…DQLVIERFGL (265 aa)) is amidoligase domain. Serine 13 lines the CTP pocket. Serine 13 contributes to the UTP binding site. ATP contacts are provided by residues 14 to 19 (SLGKGI) and aspartate 71. Aspartate 71 and glutamate 139 together coordinate Mg(2+). Residues 146–148 (DIE), 186–191 (KTKPTQ), and lysine 222 contribute to the CTP site. UTP-binding positions include 186-191 (KTKPTQ) and lysine 222. One can recognise a Glutamine amidotransferase type-1 domain in the interval 290 to 541 (TIAMVGKYME…VEAALANKKG (252 aa)). L-glutamine is bound at residue glycine 351. Cysteine 378 acts as the Nucleophile; for glutamine hydrolysis in catalysis. Residues 379–382 (LGMQ), glutamate 402, and arginine 469 contribute to the L-glutamine site. Catalysis depends on residues histidine 514 and glutamate 516.

The protein belongs to the CTP synthase family. Homotetramer.

The enzyme catalyses UTP + L-glutamine + ATP + H2O = CTP + L-glutamate + ADP + phosphate + 2 H(+). It catalyses the reaction L-glutamine + H2O = L-glutamate + NH4(+). The catalysed reaction is UTP + NH4(+) + ATP = CTP + ADP + phosphate + 2 H(+). It participates in pyrimidine metabolism; CTP biosynthesis via de novo pathway; CTP from UDP: step 2/2. Allosterically activated by GTP, when glutamine is the substrate; GTP has no effect on the reaction when ammonia is the substrate. The allosteric effector GTP functions by stabilizing the protein conformation that binds the tetrahedral intermediate(s) formed during glutamine hydrolysis. Inhibited by the product CTP, via allosteric rather than competitive inhibition. Its function is as follows. Catalyzes the ATP-dependent amination of UTP to CTP with either L-glutamine or ammonia as the source of nitrogen. Regulates intracellular CTP levels through interactions with the four ribonucleotide triphosphates. In Marinobacter nauticus (strain ATCC 700491 / DSM 11845 / VT8) (Marinobacter aquaeolei), this protein is CTP synthase.